The following is a 102-amino-acid chain: Small ribosomal subunit protein uS10 (102 aa).

This sequence belongs to the universal ribosomal protein uS10 family. Part of the 30S ribosomal subunit.

Involved in the binding of tRNA to the ribosomes. This chain is Small ribosomal subunit protein uS10, found in Leptospira biflexa serovar Patoc (strain Patoc 1 / Ames).